The sequence spans 495 residues: Ribose import ATP-binding protein RbsA 3 (495 aa).

ABC transporter domains lie at 5–240 (VRLR…VGRE) and 250–492 (AEIG…TGVK). ATP is bound at residue 37–44 (GENGAGKS).

It belongs to the ABC transporter superfamily. Ribose importer (TC 3.A.1.2.1) family. The complex is composed of an ATP-binding protein (RbsA), two transmembrane proteins (RbsC) and a solute-binding protein (RbsB).

The protein resides in the cell membrane. The catalysed reaction is D-ribose(out) + ATP + H2O = D-ribose(in) + ADP + phosphate + H(+). Part of the ABC transporter complex RbsABC involved in ribose import. Responsible for energy coupling to the transport system. The protein is Ribose import ATP-binding protein RbsA 3 of Rubrobacter xylanophilus (strain DSM 9941 / JCM 11954 / NBRC 16129 / PRD-1).